Reading from the N-terminus, the 1213-residue chain is uncharacterized protein (1213 aa).

A PH domain is found at alanine 289–glutamate 390. A VASt domain is found at leucine 776–arginine 945. 2 helical membrane-spanning segments follow: residues leucine 996 to phenylalanine 1016 and phenylalanine 1025 to glycine 1045.

It localises to the cytoplasm. Its subcellular location is the nucleus membrane. The protein localises to the cytoskeleton. It is found in the microtubule organizing center. The protein resides in the spindle pole body. This is an uncharacterized protein from Schizosaccharomyces pombe (strain 972 / ATCC 24843) (Fission yeast).